We begin with the raw amino-acid sequence, 413 residues long: MACARPLISVYSEKGESSGKNVTLPAVFKAPIRPDIVNFVHTNLRKNNRQPYAVSELAGHQTSAESWGTGRAVARIPRVRGGGTHRSGQGAFGNMCRGGRMFAPTKTWRRWHRRVNTTQKRYAICSALAASALPALVMSKGHRIEEVPELPLVVEDKVEGYKKTKEAVLLLKKLKAWNDIKKVYASQRMRAGKGKMRNRRRIQRRGPCVIYNEDNGIVKAFRNIPGITLLNVTKLNILKLAPGGHVGRFCIWTESAFRKLDDLYGTWRKAASLKSNYNLPMHKMLNTDLSRILKSPEIQRALRAPRKKIHRRVLKKNPLKNLRIMLKLNPYAKTMRRNTILRQARNHKLRVERAAAALAAKSDPKEAPAKKKPVVGKKKKPVVGRKAAAAKKPAADKKAADKRAGPEDKKPAA.

Ala2 is modified (N-acetylalanine). Position 14 is an N6-acetyllysine (Lys14). Arg97 carries the omega-N-methylarginine modification. Lys106 carries the N6-acetyllysine modification. Lys239 is covalently cross-linked (Glycyl lysine isopeptide (Lys-Gly) (interchain with G-Cter in SUMO2)). Residue Lys259 is modified to N6-acetyllysine. Thr266 carries the phosphothreonine modification. Phosphoserine occurs at positions 290 and 295. Arg300 carries the post-translational modification Citrulline. Lys327 is covalently cross-linked (Glycyl lysine isopeptide (Lys-Gly) (interchain with G-Cter in SUMO2)). Lys333 bears the N6-acetyllysine mark. Residues 355 to 413 (AAALAAKSDPKEAPAKKKPVVGKKKKPVVGRKAAAAKKPAADKKAADKRAGPEDKKPAA) form a disordered region. Lys361 bears the N6-acetyllysine; alternate mark. Lys361 participates in a covalent cross-link: Glycyl lysine isopeptide (Lys-Gly) (interchain with G-Cter in SUMO1); alternate. Ser362 is subject to Phosphoserine. Basic residues predominate over residues 370 to 383 (KKKPVVGKKKKPVV). Basic and acidic residues predominate over residues 393–413 (PAADKKAADKRAGPEDKKPAA).

The protein belongs to the universal ribosomal protein uL4 family. As to quaternary structure, component of the large ribosomal subunit. May bind IPO9 with low affinity. Interacts with RBM3. In terms of processing, citrullinated by PADI4.

The protein localises to the cytoplasm. In terms of biological role, component of the large ribosomal subunit. The ribosome is a large ribonucleoprotein complex responsible for the synthesis of proteins in the cell. The sequence is that of Large ribosomal subunit protein uL4 (RPL4) from Oryctolagus cuniculus (Rabbit).